The primary structure comprises 454 residues: Bifunctional protein GlmU (454 aa).

Residues 1–226 are pyrophosphorylase; sequence MALNVVILAA…AIEVEGANNR (226 aa). UDP-N-acetyl-alpha-D-glucosamine is bound by residues 8 to 11, Lys-22, Gln-73, 78 to 79, 100 to 102, Gly-137, Glu-151, Asn-166, and Asn-224; these read LAAG, GT, and YGD. Residue Asp-102 participates in Mg(2+) binding. Mg(2+) is bound at residue Asn-224. The tract at residues 227–247 is linker; it reads VQLAQLERAYQAREAEKLMIA. Positions 248 to 454 are N-acetyltransferase; that stretch reads GANLRDPSRI…GWQRPVKIKK (207 aa). Residues Arg-330 and Lys-348 each coordinate UDP-N-acetyl-alpha-D-glucosamine. The Proton acceptor role is filled by His-360. UDP-N-acetyl-alpha-D-glucosamine-binding residues include Tyr-363 and Asn-374. Residues Ala-377, 383–384, Ser-402, Ala-420, and Arg-437 each bind acetyl-CoA; that span reads NY.

It in the N-terminal section; belongs to the N-acetylglucosamine-1-phosphate uridyltransferase family. The protein in the C-terminal section; belongs to the transferase hexapeptide repeat family. In terms of assembly, homotrimer. Mg(2+) is required as a cofactor.

It localises to the cytoplasm. The enzyme catalyses alpha-D-glucosamine 1-phosphate + acetyl-CoA = N-acetyl-alpha-D-glucosamine 1-phosphate + CoA + H(+). It catalyses the reaction N-acetyl-alpha-D-glucosamine 1-phosphate + UTP + H(+) = UDP-N-acetyl-alpha-D-glucosamine + diphosphate. Its pathway is nucleotide-sugar biosynthesis; UDP-N-acetyl-alpha-D-glucosamine biosynthesis; N-acetyl-alpha-D-glucosamine 1-phosphate from alpha-D-glucosamine 6-phosphate (route II): step 2/2. The protein operates within nucleotide-sugar biosynthesis; UDP-N-acetyl-alpha-D-glucosamine biosynthesis; UDP-N-acetyl-alpha-D-glucosamine from N-acetyl-alpha-D-glucosamine 1-phosphate: step 1/1. It participates in bacterial outer membrane biogenesis; LPS lipid A biosynthesis. Functionally, catalyzes the last two sequential reactions in the de novo biosynthetic pathway for UDP-N-acetylglucosamine (UDP-GlcNAc). The C-terminal domain catalyzes the transfer of acetyl group from acetyl coenzyme A to glucosamine-1-phosphate (GlcN-1-P) to produce N-acetylglucosamine-1-phosphate (GlcNAc-1-P), which is converted into UDP-GlcNAc by the transfer of uridine 5-monophosphate (from uridine 5-triphosphate), a reaction catalyzed by the N-terminal domain. In Shewanella sp. (strain MR-4), this protein is Bifunctional protein GlmU.